A 90-amino-acid polypeptide reads, in one-letter code: Acylphosphatase (90 aa).

The region spanning 3–90 (QYHMIADGRV…KGYRTFSISY (88 aa)) is the Acylphosphatase-like domain. Active-site residues include R18 and N36.

It belongs to the acylphosphatase family.

The catalysed reaction is an acyl phosphate + H2O = a carboxylate + phosphate + H(+). This Bacillus velezensis (strain DSM 23117 / BGSC 10A6 / LMG 26770 / FZB42) (Bacillus amyloliquefaciens subsp. plantarum) protein is Acylphosphatase (acyP).